Consider the following 144-residue polypeptide: 3-dehydroquinate dehydratase (144 aa).

Tyrosine 24 functions as the Proton acceptor in the catalytic mechanism. The substrate site is built by asparagine 73, histidine 79, and aspartate 86. Residue histidine 99 is the Proton donor of the active site. Substrate is bound by residues 100–101 (LS) and arginine 110.

The protein belongs to the type-II 3-dehydroquinase family. Homododecamer.

The enzyme catalyses 3-dehydroquinate = 3-dehydroshikimate + H2O. It participates in metabolic intermediate biosynthesis; chorismate biosynthesis; chorismate from D-erythrose 4-phosphate and phosphoenolpyruvate: step 3/7. Its function is as follows. Catalyzes a trans-dehydration via an enolate intermediate. The protein is 3-dehydroquinate dehydratase of Shewanella sp. (strain ANA-3).